The chain runs to 142 residues: Large ribosomal subunit protein uL13 (142 aa).

Belongs to the universal ribosomal protein uL13 family. In terms of assembly, part of the 50S ribosomal subunit.

Its function is as follows. This protein is one of the early assembly proteins of the 50S ribosomal subunit, although it is not seen to bind rRNA by itself. It is important during the early stages of 50S assembly. This is Large ribosomal subunit protein uL13 from Shigella dysenteriae serotype 1 (strain Sd197).